The following is a 302-amino-acid chain: 4-hydroxy-tetrahydrodipicolinate synthase (302 aa).

Threonine 55 is a pyruvate binding site. Catalysis depends on tyrosine 144, which acts as the Proton donor/acceptor. The active-site Schiff-base intermediate with substrate is the lysine 172. Valine 214 serves as a coordination point for pyruvate.

The protein belongs to the DapA family. In terms of assembly, homotetramer; dimer of dimers.

It localises to the cytoplasm. It carries out the reaction L-aspartate 4-semialdehyde + pyruvate = (2S,4S)-4-hydroxy-2,3,4,5-tetrahydrodipicolinate + H2O + H(+). The protein operates within amino-acid biosynthesis; L-lysine biosynthesis via DAP pathway; (S)-tetrahydrodipicolinate from L-aspartate: step 3/4. Catalyzes the condensation of (S)-aspartate-beta-semialdehyde [(S)-ASA] and pyruvate to 4-hydroxy-tetrahydrodipicolinate (HTPA). This chain is 4-hydroxy-tetrahydrodipicolinate synthase, found in Synechococcus sp. (strain CC9902).